We begin with the raw amino-acid sequence, 539 residues long: Chaperonin GroEL (539 aa).

Residues 29–32 (TIGP), 86–90 (DGTTT), Gly-413, 476–478 (NAA), and Asp-492 each bind ATP.

It belongs to the chaperonin (HSP60) family. As to quaternary structure, forms a cylinder of 14 subunits composed of two heptameric rings stacked back-to-back. Interacts with the co-chaperonin GroES.

It is found in the cytoplasm. The enzyme catalyses ATP + H2O + a folded polypeptide = ADP + phosphate + an unfolded polypeptide.. Together with its co-chaperonin GroES, plays an essential role in assisting protein folding. The GroEL-GroES system forms a nano-cage that allows encapsulation of the non-native substrate proteins and provides a physical environment optimized to promote and accelerate protein folding. This chain is Chaperonin GroEL, found in Staphylococcus epidermidis.